A 431-amino-acid chain; its full sequence is Female gametocyte surface protein P47 (431 aa).

The signal sequence occupies residues 1 to 20; it reads MKGFTGASIIVFYLIKGYLS. The 153-residue stretch at 26-178 folds into the 6-Cys 1 domain; the sequence is NGYVCDFKFN…GLVKIILNNQ (153 aa). Cystine bridges form between cysteine 30-cysteine 55, cysteine 70-cysteine 145, and cysteine 88-cysteine 143. Residue asparagine 45 is glycosylated (N-linked (GlcNAc...) asparagine). N-linked (GlcNAc...) asparagine glycosylation is present at asparagine 239. Positions 278–413 constitute a 6-Cys 2 domain; that stretch reads NIDGCDFTVP…MELKISSSKN (136 aa). Intrachain disulfides connect cysteine 282–cysteine 309, cysteine 326–cysteine 395, and cysteine 335–cysteine 393. Serine 409 is lipidated: GPI-anchor amidated serine. Positions 410–431 are cleaved as a propeptide — removed in mature form; the sequence is SSKNIFISFILLSIIVSIFYLF.

Its subcellular location is the cell surface. The protein localises to the cell membrane. Its function is as follows. Required for female fertility. The sequence is that of Female gametocyte surface protein P47 (PB47) from Plasmodium berghei (strain Anka).